Here is a 185-residue protein sequence, read N- to C-terminus: Segregation and condensation protein B (185 aa).

This sequence belongs to the ScpB family. Homodimer. Homodimerization may be required to stabilize the binding of ScpA to the Smc head domains. Component of a cohesin-like complex composed of ScpA, ScpB and the Smc homodimer, in which ScpA and ScpB bind to the head domain of Smc. The presence of the three proteins is required for the association of the complex with DNA.

It localises to the cytoplasm. In terms of biological role, participates in chromosomal partition during cell division. May act via the formation of a condensin-like complex containing Smc and ScpA that pull DNA away from mid-cell into both cell halves. This chain is Segregation and condensation protein B, found in Carboxydothermus hydrogenoformans (strain ATCC BAA-161 / DSM 6008 / Z-2901).